The chain runs to 835 residues: Leucine--tRNA ligase (835 aa).

The short motif at 36-46 is the 'HIGH' region element; the sequence is PYPSGKIHVGH. Residues 602 to 606 carry the 'KMSKS' region motif; sequence KMSKS. K605 contacts ATP.

It belongs to the class-I aminoacyl-tRNA synthetase family.

It localises to the cytoplasm. It catalyses the reaction tRNA(Leu) + L-leucine + ATP = L-leucyl-tRNA(Leu) + AMP + diphosphate. In Rickettsia conorii (strain ATCC VR-613 / Malish 7), this protein is Leucine--tRNA ligase.